Here is a 36-residue protein sequence, read N- to C-terminus: Turgencin-A (36 aa).

Intrachain disulfides connect cysteine 8-cysteine 33, cysteine 12-cysteine 29, and cysteine 17-cysteine 26. At methionine 10 the chain carries Methionine sulfoxide. At valine 36 the chain carries Valine amide.

The protein localises to the secreted. Functionally, has antimicrobial activity against Gram-positive bacteria (C.glutamicum ATCC 13032 (MIC=0.4 uM), B.subtilis ATCC 23857 (MIC=0.4 uM) and S.aureus ATCC 9144 (MIC=6.3 uM)) and Gram-negative bacteria (E.coli ATCC 25922 (MIC=0.8 uM) and P.aeruginosa ATCC 27853 (MIC=1.6 uM)). The polypeptide is Turgencin-A (Synoicum turgens (Colonial ascidian)).